The following is a 572-amino-acid chain: Proline--tRNA ligase (572 aa).

It belongs to the class-II aminoacyl-tRNA synthetase family. ProS type 1 subfamily. In terms of assembly, homodimer.

The protein resides in the cytoplasm. It catalyses the reaction tRNA(Pro) + L-proline + ATP = L-prolyl-tRNA(Pro) + AMP + diphosphate. Functionally, catalyzes the attachment of proline to tRNA(Pro) in a two-step reaction: proline is first activated by ATP to form Pro-AMP and then transferred to the acceptor end of tRNA(Pro). As ProRS can inadvertently accommodate and process non-cognate amino acids such as alanine and cysteine, to avoid such errors it has two additional distinct editing activities against alanine. One activity is designated as 'pretransfer' editing and involves the tRNA(Pro)-independent hydrolysis of activated Ala-AMP. The other activity is designated 'posttransfer' editing and involves deacylation of mischarged Ala-tRNA(Pro). The misacylated Cys-tRNA(Pro) is not edited by ProRS. The polypeptide is Proline--tRNA ligase (Leuconostoc mesenteroides subsp. mesenteroides (strain ATCC 8293 / DSM 20343 / BCRC 11652 / CCM 1803 / JCM 6124 / NCDO 523 / NBRC 100496 / NCIMB 8023 / NCTC 12954 / NRRL B-1118 / 37Y)).